The primary structure comprises 354 residues: Uroporphyrinogen decarboxylase (354 aa).

Substrate is bound by residues 25 to 29 (RQAGR), phenylalanine 44, aspartate 75, tyrosine 152, threonine 207, and histidine 330.

Belongs to the uroporphyrinogen decarboxylase family. Homodimer.

It localises to the cytoplasm. It catalyses the reaction uroporphyrinogen III + 4 H(+) = coproporphyrinogen III + 4 CO2. The protein operates within porphyrin-containing compound metabolism; protoporphyrin-IX biosynthesis; coproporphyrinogen-III from 5-aminolevulinate: step 4/4. Catalyzes the decarboxylation of four acetate groups of uroporphyrinogen-III to yield coproporphyrinogen-III. In Xylella fastidiosa (strain Temecula1 / ATCC 700964), this protein is Uroporphyrinogen decarboxylase.